A 280-amino-acid polypeptide reads, in one-letter code: Inner membrane ABC transporter permease protein YcjP (280 aa).

The Cytoplasmic segment spans residues 1–10; it reads MATNKRTLSR. A helical membrane pass occupies residues 11 to 31; sequence IGFYCGLALFLIITLFPFFVM. Residues 32 to 53 are Periplasmic-facing; it reads LMTSFKGAKEAISLHPTLLPQQ. Residues 54 to 74 form a helical membrane-spanning segment; that stretch reads WTLEHYVDIFNPMIFPFVDYF. One can recognise an ABC transmembrane type-1 domain in the interval 74–265; sequence FRNSLVVSVV…LPVVIMYALS (192 aa). At 75-77 the chain is on the cytoplasmic side; that stretch reads RNS. A helical membrane pass occupies residues 78 to 98; that stretch reads LVVSVVSSVVAVFLGILGAYA. Topologically, residues 99–117 are periplasmic; that stretch reads LSRLRFKGRMTINASFYTV. Residues 118 to 138 form a helical membrane-spanning segment; the sequence is YMFSGILLVVPLFKIITALGI. The Cytoplasmic segment spans residues 139-140; the sequence is YD. A helical transmembrane segment spans residues 141–161; that stretch reads TEMALIITMVTQTLPTAVFML. At 162 to 189 the chain is on the periplasmic side; that stretch reads KSYFDTIPDEIEEAAMMDGLNRLQIIFR. Residues 190 to 210 form a helical membrane-spanning segment; the sequence is ITVPLAMSGLISVFVYCFMVA. The Cytoplasmic portion of the chain corresponds to 211–214; that stretch reads WNDY. A helical membrane pass occupies residues 215–235; sequence LFASIFLSSASNFTLPVGLNA. Residues 236 to 242 lie on the Periplasmic side of the membrane; sequence LFSTPDY. The helical transmembrane segment at 243-263 threads the bilayer; sequence IWGRMMAASLVTALPVVIMYA. The Cytoplasmic segment spans residues 264–280; that stretch reads LSERFIKSGLTAGGVKG.

It belongs to the binding-protein-dependent transport system permease family. MalFG subfamily.

The protein resides in the cell inner membrane. Its function is as follows. Probably part of the binding-protein-dependent transport system YcjNOP. Probably responsible for the translocation of the substrate across the membrane. This chain is Inner membrane ABC transporter permease protein YcjP (ycjP), found in Escherichia coli (strain K12).